Consider the following 581-residue polypeptide: Serine/threonine-protein kinase SSN3 (581 aa).

The segment at 34–57 (LWSQQQQQQLLDTKGSASTSKSPM) is disordered. Residues 48–57 (GSASTSKSPM) are compositionally biased toward polar residues. The 391-residue stretch at 85–475 (YEIIGYIAAG…AIDALEHEYF (391 aa)) folds into the Protein kinase domain. ATP contacts are provided by residues 91-99 (IAAGTYGKV) and K195. D298 functions as the Proton acceptor in the catalytic mechanism.

The protein belongs to the protein kinase superfamily. CMGC Ser/Thr protein kinase family. CDC2/CDKX subfamily. Component of the SRB8-11 complex, a regulatory module of the Mediator complex. Mg(2+) serves as cofactor.

The protein resides in the nucleus. It catalyses the reaction L-seryl-[protein] + ATP = O-phospho-L-seryl-[protein] + ADP + H(+). It carries out the reaction L-threonyl-[protein] + ATP = O-phospho-L-threonyl-[protein] + ADP + H(+). The catalysed reaction is [DNA-directed RNA polymerase] + ATP = phospho-[DNA-directed RNA polymerase] + ADP + H(+). Functionally, component of the SRB8-11 complex. The SRB8-11 complex is a regulatory module of the Mediator complex which is itself involved in regulation of basal and activated RNA polymerase II-dependent transcription. The SRB8-11 complex may be involved in the transcriptional repression of a subset of genes regulated by Mediator. It may inhibit the association of the Mediator complex with RNA polymerase II to form the holoenzyme complex. The SRB8-11 complex phosphorylates the C-terminal domain (CTD) of the largest subunit of RNA polymerase II. This chain is Serine/threonine-protein kinase SSN3 (SSN3), found in Eremothecium gossypii (strain ATCC 10895 / CBS 109.51 / FGSC 9923 / NRRL Y-1056) (Yeast).